Consider the following 252-residue polypeptide: Phosphoribosylaminoimidazole-succinocarboxamide synthase 1 (252 aa).

It belongs to the SAICAR synthetase family.

It carries out the reaction 5-amino-1-(5-phospho-D-ribosyl)imidazole-4-carboxylate + L-aspartate + ATP = (2S)-2-[5-amino-1-(5-phospho-beta-D-ribosyl)imidazole-4-carboxamido]succinate + ADP + phosphate + 2 H(+). Its pathway is purine metabolism; IMP biosynthesis via de novo pathway; 5-amino-1-(5-phospho-D-ribosyl)imidazole-4-carboxamide from 5-amino-1-(5-phospho-D-ribosyl)imidazole-4-carboxylate: step 1/2. The polypeptide is Phosphoribosylaminoimidazole-succinocarboxamide synthase 1 (purC1) (Caulobacter vibrioides (strain ATCC 19089 / CIP 103742 / CB 15) (Caulobacter crescentus)).